Here is a 200-residue protein sequence, read N- to C-terminus: NADH-ubiquinone oxidoreductase 21.3 kDa subunit (200 aa).

A run of 3 helical transmembrane segments spans residues 16–36 (IKSG…MASL), 48–68 (MHVF…GGIY), and 105–125 (FPVI…FAFS).

Complex I is composed of about 40 different subunits.

It is found in the mitochondrion inner membrane. It carries out the reaction a ubiquinone + NADH + 5 H(+)(in) = a ubiquinol + NAD(+) + 4 H(+)(out). Transfer of electrons from NADH to the respiratory chain. The immediate electron acceptor for the enzyme is believed to be ubiquinone. This chain is NADH-ubiquinone oxidoreductase 21.3 kDa subunit, found in Neurospora crassa (strain ATCC 24698 / 74-OR23-1A / CBS 708.71 / DSM 1257 / FGSC 987).